The chain runs to 628 residues: Chaperone protein DnaK (628 aa).

T195 is subject to Phosphothreonine; by autocatalysis. Residues 545–628 are disordered; that stretch reads QLEENEGAAQ…VIDADFKAAE (84 aa). Residues 555 to 591 are compositionally biased toward basic and acidic residues; it reads DAKDALKAAADEAEEAVRSEDDARIESAQKRLEEELR. The span at 596–612 shows a compositional bias: low complexity; sequence AQQAAGQGQPQGAQAQG. Basic and acidic residues predominate over residues 614 to 628; it reads KADDDVIDADFKAAE.

The protein belongs to the heat shock protein 70 family.

Its function is as follows. Acts as a chaperone. The protein is Chaperone protein DnaK of Deinococcus deserti (strain DSM 17065 / CIP 109153 / LMG 22923 / VCD115).